Reading from the N-terminus, the 377-residue chain is L-arabinitol 4-dehydrogenase (377 aa).

8 residues coordinate Zn(2+): Cys-66, His-91, Glu-92, Cys-121, Cys-124, Cys-127, Cys-135, and Glu-176. NAD(+)-binding positions include 203–204, Asp-224, Arg-229, Ile-296, and 320–322; these read PI and QYR.

The protein belongs to the zinc-containing alcohol dehydrogenase family. Homotetramer. The cofactor is Zn(2+). The N-terminus is blocked.

It catalyses the reaction L-arabinitol + NAD(+) = L-xylulose + NADH + H(+). It participates in carbohydrate degradation; L-arabinose degradation via L-arabinitol; D-xylulose 5-phosphate from L-arabinose (fungal route): step 2/5. Functionally, catalyzes the NAD-dependent oxidation of L-arabinitol to L-xylulose in the fungal L-arabinose catabolic pathway. L-arabinose catabolism is important for using plant material as a carbon source. Can partially compensate for xylitol dehydrogenase in xdh1 mutants. Also oxidizes galactitol to L-xylo-3-hexulose as an alternative to the standard Leloir pathway for D-galactose metabolism. NADP cannot act as a cosubstrate. This Hypocrea jecorina (Trichoderma reesei) protein is L-arabinitol 4-dehydrogenase (lad1).